Here is a 335-residue protein sequence, read N- to C-terminus: UPF0353 protein Mjls_2492 (335 aa).

The next 2 helical transmembrane spans lie at 18–38 (WFFLFLIVVLALAGLYVIVAL) and 67–87 (LPAILLVASLVLLTVAMAGPT). The VWFA domain maps to 98-294 (VVMLVIDVSQ…EQLREVYANL (197 aa)). The chain crosses the membrane as a helical span at residues 309-329 (VGWLRLGALVLALSALAALLL).

It belongs to the UPF0353 family.

Its subcellular location is the cell membrane. The polypeptide is UPF0353 protein Mjls_2492 (Mycobacterium sp. (strain JLS)).